We begin with the raw amino-acid sequence, 205 residues long: Probable thymidylate kinase (205 aa).

10 to 17 (GIDGSGKT) serves as a coordination point for ATP.

Belongs to the thymidylate kinase family.

It catalyses the reaction dTMP + ATP = dTDP + ADP. This Pyrococcus horikoshii (strain ATCC 700860 / DSM 12428 / JCM 9974 / NBRC 100139 / OT-3) protein is Probable thymidylate kinase (tmk).